The chain runs to 512 residues: Activin receptor type-2B (512 aa).

Positions 1–24 (MSASWLTLAVLCATLGAGPGHGEA) are cleaved as a signal peptide. The Extracellular portion of the chain corresponds to 25 to 137 (ETRECIYYNA…PPPPTPSLLN (113 aa)). 5 cysteine pairs are disulfide-bonded: Cys29–Cys59, Cys49–Cys77, Cys84–Cys103, Cys90–Cys102, and Cys104–Cys109. N-linked (GlcNAc...) asparagine glycans are attached at residues Asn42 and Asn65. The chain crosses the membrane as a helical span at residues 138–158 (ILVYSLLPIAVLSVAILLAFW). Over 159–512 (MYRHRKPPYG…VDLPPKESSI (354 aa)) the chain is Cytoplasmic. Residues 190 to 478 (LQLLEIKARG…LSAGCVEERI (289 aa)) form the Protein kinase domain. Residues 196-204 (KARGRFGCV) and Lys217 contribute to the ATP site. Residue Asp321 is the Proton acceptor of the active site.

The protein belongs to the protein kinase superfamily. TKL Ser/Thr protein kinase family. TGFB receptor subfamily. Mg(2+) serves as cofactor. The cofactor is Mn(2+). Not expressed in hen anterior pituitary during the ovulatory cycle but expressed in the ovarian follicle.

The protein resides in the membrane. The enzyme catalyses L-threonyl-[receptor-protein] + ATP = O-phospho-L-threonyl-[receptor-protein] + ADP + H(+). It carries out the reaction L-seryl-[receptor-protein] + ATP = O-phospho-L-seryl-[receptor-protein] + ADP + H(+). Functionally, on ligand binding, forms a receptor complex consisting of two type II and two type I transmembrane serine/threonine kinases. Type II receptors phosphorylate and activate type I receptors which autophosphorylate, then bind and activate SMAD transcriptional regulators. Receptor for activin A, activin B and inhibin A. May modulate neuropeptide expression in dorsal root ganglia (DRG) neurons and ovarian follicle development. The polypeptide is Activin receptor type-2B (ACVR2B) (Gallus gallus (Chicken)).